The chain runs to 311 residues: Methionyl-tRNA formyltransferase (311 aa).

110-113 is a (6S)-5,6,7,8-tetrahydrofolate binding site; that stretch reads SLLP.

It belongs to the Fmt family.

It carries out the reaction L-methionyl-tRNA(fMet) + (6R)-10-formyltetrahydrofolate = N-formyl-L-methionyl-tRNA(fMet) + (6S)-5,6,7,8-tetrahydrofolate + H(+). Functionally, attaches a formyl group to the free amino group of methionyl-tRNA(fMet). The formyl group appears to play a dual role in the initiator identity of N-formylmethionyl-tRNA by promoting its recognition by IF2 and preventing the misappropriation of this tRNA by the elongation apparatus. This is Methionyl-tRNA formyltransferase from Streptococcus agalactiae serotype Ia (strain ATCC 27591 / A909 / CDC SS700).